The sequence spans 355 residues: Elongation factor Ts (355 aa).

The involved in Mg(2+) ion dislocation from EF-Tu stretch occupies residues Thr82 to Val85.

It belongs to the EF-Ts family.

The protein localises to the cytoplasm. Associates with the EF-Tu.GDP complex and induces the exchange of GDP to GTP. It remains bound to the aminoacyl-tRNA.EF-Tu.GTP complex up to the GTP hydrolysis stage on the ribosome. The sequence is that of Elongation factor Ts from Helicobacter pylori (strain HPAG1).